Here is a 742-residue protein sequence, read N- to C-terminus: Clamp-binding protein CrfC (742 aa).

Residues 41–45 form a clamp-binding consensus region; that stretch reads QLALP. The 337-residue stretch at 66–402 folds into the Dynamin-type G domain; the sequence is SRLEMVLAIV…LWEDSLFAQP (337 aa). Residues 76–83 are G1 motif; the sequence is GTMKAGKS. Residues 102–104 form a G2 motif region; that stretch reads MTA. Positions 236–239 are G3 motif; it reads DTPG. The G4 motif stretch occupies residues 297–300; sequence NKFD. The interval 331-334 is G5 motif; it reads FPVS. Residues 440–472 adopt a coiled-coil conformation; sequence RAHGLNVACEQLRQNIHQIEESLQLLQLNQAQV.

Belongs to the TRAFAC class dynamin-like GTPase superfamily. Dynamin/Fzo/YdjA family. Forms homooligomers. Binds to the beta sliding clamp processivity factor (DnaN) in the presence and absence of DNA, may bind to the clamp itself as homodimers or trimers. Homooligomers may be able to bind more than 1 clamp complex.

The protein resides in the cytoplasm. Important for the colocalization of sister nascent DNA strands after replication fork passage during DNA replication, and for positioning and subsequent partitioning of sister chromosomes. Does not have GTPase activity on its own. This is Clamp-binding protein CrfC (crfC) from Escherichia coli (strain K12).